A 462-amino-acid polypeptide reads, in one-letter code: A-type ATP synthase subunit B (462 aa).

This sequence belongs to the ATPase alpha/beta chains family. As to quaternary structure, has multiple subunits with at least A(3), B(3), C, D, E, F, H, I and proteolipid K(x).

Its subcellular location is the cell membrane. In terms of biological role, component of the A-type ATP synthase that produces ATP from ADP in the presence of a proton gradient across the membrane. The B chain is a regulatory subunit. This chain is A-type ATP synthase subunit B, found in Methanobrevibacter smithii (strain ATCC 35061 / DSM 861 / OCM 144 / PS).